A 102-amino-acid polypeptide reads, in one-letter code: MHVKKGDTVVVITGKDKGKKGKVLQVLPKKNRVIVEGVAMVTKHQKPNQQMQQGGRIEQEAAIDASNVMIWDKKANQGVRVGYKLENGKKVRVSKKTGEVID.

This sequence belongs to the universal ribosomal protein uL24 family. In terms of assembly, part of the 50S ribosomal subunit.

One of two assembly initiator proteins, it binds directly to the 5'-end of the 23S rRNA, where it nucleates assembly of the 50S subunit. Its function is as follows. One of the proteins that surrounds the polypeptide exit tunnel on the outside of the subunit. The chain is Large ribosomal subunit protein uL24 from Alkaliphilus oremlandii (strain OhILAs) (Clostridium oremlandii (strain OhILAs)).